A 242-amino-acid polypeptide reads, in one-letter code: Triosephosphate isomerase (242 aa).

Substrate is bound at residue 8–10; the sequence is NWK. Catalysis depends on His-91, which acts as the Electrophile. Residue Glu-155 is the Proton acceptor of the active site. Substrate-binding residues include Gly-161 and Ser-192.

This sequence belongs to the triosephosphate isomerase family. In terms of assembly, homodimer.

The protein resides in the cytoplasm. The catalysed reaction is D-glyceraldehyde 3-phosphate = dihydroxyacetone phosphate. The protein operates within carbohydrate biosynthesis; gluconeogenesis. It functions in the pathway carbohydrate degradation; glycolysis; D-glyceraldehyde 3-phosphate from glycerone phosphate: step 1/1. Involved in the gluconeogenesis. Catalyzes stereospecifically the conversion of dihydroxyacetone phosphate (DHAP) to D-glyceraldehyde-3-phosphate (G3P). The polypeptide is Triosephosphate isomerase (Wolbachia pipientis wMel).